Here is an 803-residue protein sequence, read N- to C-terminus: Phenylalanine--tRNA ligase beta subunit (803 aa).

Residues 39-151 (SMKFSGIKIG…KNAIIGEDIK (113 aa)) enclose the tRNA-binding domain. A B5 domain is found at 406–482 (PKKILIKLYK…RFYGFEKIPI (77 aa)). Mg(2+)-binding residues include Asp-466 and Asp-470. The FDX-ACB domain maps to 707–800 (SDIPFNYRDI…LKKNFLIEIR (94 aa)).

It belongs to the phenylalanyl-tRNA synthetase beta subunit family. Type 1 subfamily. Tetramer of two alpha and two beta subunits. Requires Mg(2+) as cofactor.

It localises to the cytoplasm. The catalysed reaction is tRNA(Phe) + L-phenylalanine + ATP = L-phenylalanyl-tRNA(Phe) + AMP + diphosphate + H(+). The protein is Phenylalanine--tRNA ligase beta subunit of Wigglesworthia glossinidia brevipalpis.